A 448-amino-acid polypeptide reads, in one-letter code: Methylenetetrahydrofolate--tRNA-(uracil-5-)-methyltransferase TrmFO (448 aa).

Residue 13-18 coordinates FAD; the sequence is GAGLAG.

Belongs to the MnmG family. TrmFO subfamily. It depends on FAD as a cofactor.

Its subcellular location is the cytoplasm. It carries out the reaction uridine(54) in tRNA + (6R)-5,10-methylene-5,6,7,8-tetrahydrofolate + NADH + H(+) = 5-methyluridine(54) in tRNA + (6S)-5,6,7,8-tetrahydrofolate + NAD(+). The enzyme catalyses uridine(54) in tRNA + (6R)-5,10-methylene-5,6,7,8-tetrahydrofolate + NADPH + H(+) = 5-methyluridine(54) in tRNA + (6S)-5,6,7,8-tetrahydrofolate + NADP(+). In terms of biological role, catalyzes the folate-dependent formation of 5-methyl-uridine at position 54 (M-5-U54) in all tRNAs. This is Methylenetetrahydrofolate--tRNA-(uracil-5-)-methyltransferase TrmFO from Streptococcus pyogenes serotype M12 (strain MGAS2096).